Consider the following 628-residue polypeptide: Phosphomethylpyrimidine synthase (628 aa).

Residues Asn229, Met258, Tyr287, His323, 343–345 (SRG), 384–387 (DGLR), and Glu423 contribute to the substrate site. Residue His427 participates in Zn(2+) binding. Position 450 (Tyr450) interacts with substrate. His491 contacts Zn(2+). The [4Fe-4S] cluster site is built by Cys571, Cys574, and Cys579.

This sequence belongs to the ThiC family. Homodimer. The cofactor is [4Fe-4S] cluster.

The catalysed reaction is 5-amino-1-(5-phospho-beta-D-ribosyl)imidazole + S-adenosyl-L-methionine = 4-amino-2-methyl-5-(phosphooxymethyl)pyrimidine + CO + 5'-deoxyadenosine + formate + L-methionine + 3 H(+). The protein operates within cofactor biosynthesis; thiamine diphosphate biosynthesis. Its function is as follows. Catalyzes the synthesis of the hydroxymethylpyrimidine phosphate (HMP-P) moiety of thiamine from aminoimidazole ribotide (AIR) in a radical S-adenosyl-L-methionine (SAM)-dependent reaction. In Variovorax paradoxus (strain S110), this protein is Phosphomethylpyrimidine synthase.